A 433-amino-acid polypeptide reads, in one-letter code: Glycerol-3-phosphate dehydrogenase [NAD(+)] (433 aa).

Residues 17–22, phenylalanine 49, and phenylalanine 117 contribute to the NAD(+) site; that span reads GSGNWG. Lysine 140 contacts substrate. Residue alanine 173 participates in NAD(+) binding. The disordered stretch occupies residues 187–246; it reads IAYDPPPIDSSRAATPRDRSPNYDSTSANKLPDLTVTSADSNGKDDRGRRTKAKLTPVPE. The span at 208–227 shows a compositional bias: polar residues; it reads NYDSTSANKLPDLTVTSADS. The active-site Proton acceptor is the lysine 283. NAD(+)-binding residues include arginine 349 and glutamine 378. Position 349-350 (349-350) interacts with substrate; that stretch reads RN.

Belongs to the NAD-dependent glycerol-3-phosphate dehydrogenase family.

It carries out the reaction sn-glycerol 3-phosphate + NAD(+) = dihydroxyacetone phosphate + NADH + H(+). This is Glycerol-3-phosphate dehydrogenase [NAD(+)] from Pyricularia oryzae (strain Y34) (Rice blast fungus).